The following is a 134-amino-acid chain: UPF0412 protein YaaI (134 aa).

Positions 1-23 (MRSVLTISVGLLFGLALSSVAHA) are cleaved as a signal peptide.

Belongs to the UPF0412 family.

The sequence is that of UPF0412 protein YaaI from Salmonella typhimurium (strain LT2 / SGSC1412 / ATCC 700720).